The sequence spans 397 residues: 4-hydroxybenzoate polyprenyltransferase, mitochondrial (397 aa).

A mitochondrion-targeting transit peptide spans 1–14; it reads MFAVRHLLKSRKHF. A run of 9 helical transmembrane segments spans residues 96-116, 121-141, 169-189, 190-210, 213-233, 242-262, 289-309, 313-333, and 345-365; these read IGTY…ADAG, LTML…GCTI, FDAI…LVQL, NWQS…YPLM, VTYW…LLGW, LAAC…YDTI, VWLS…GWAC, LPYY…IYSL, and FLSN…GTLL.

The protein belongs to the UbiA prenyltransferase family. Mg(2+) serves as cofactor.

The protein localises to the mitochondrion inner membrane. The enzyme catalyses an all-trans-polyprenyl diphosphate + 4-hydroxybenzoate = a 4-hydroxy-3-(all-trans-polyprenyl)benzoate + diphosphate. It participates in cofactor biosynthesis; ubiquinone biosynthesis. Its function is as follows. Catalyzes the prenylation of para-hydroxybenzoate (PHB) with an all-trans polyprenyl group. Mediates the second step in the final reaction sequence of coenzyme Q (CoQ) biosynthesis, which is the condensation of the polyisoprenoid side chain with PHB, generating the first membrane-bound Q intermediate. In Drosophila pseudoobscura pseudoobscura (Fruit fly), this protein is 4-hydroxybenzoate polyprenyltransferase, mitochondrial.